Consider the following 436-residue polypeptide: 3-ketoacyl-CoA thiolase (436 aa).

Cys-99 serves as the catalytic Acyl-thioester intermediate. Catalysis depends on proton acceptor residues His-392 and Cys-422.

Belongs to the thiolase-like superfamily. Thiolase family. As to quaternary structure, heterotetramer of two alpha chains (FadJ) and two beta chains (FadI).

It localises to the cytoplasm. It carries out the reaction an acyl-CoA + acetyl-CoA = a 3-oxoacyl-CoA + CoA. Its pathway is lipid metabolism; fatty acid beta-oxidation. Functionally, catalyzes the final step of fatty acid oxidation in which acetyl-CoA is released and the CoA ester of a fatty acid two carbons shorter is formed. The sequence is that of 3-ketoacyl-CoA thiolase from Escherichia coli (strain SMS-3-5 / SECEC).